Reading from the N-terminus, the 159-residue chain is Ribosomal RNA large subunit methyltransferase H (159 aa).

Residues L76, G108, and 127 to 132 (FSKMTF) contribute to the S-adenosyl-L-methionine site.

It belongs to the RNA methyltransferase RlmH family. As to quaternary structure, homodimer.

The protein resides in the cytoplasm. It catalyses the reaction pseudouridine(1915) in 23S rRNA + S-adenosyl-L-methionine = N(3)-methylpseudouridine(1915) in 23S rRNA + S-adenosyl-L-homocysteine + H(+). Specifically methylates the pseudouridine at position 1915 (m3Psi1915) in 23S rRNA. In Clostridium novyi (strain NT), this protein is Ribosomal RNA large subunit methyltransferase H.